A 350-amino-acid chain; its full sequence is Flap endonuclease 1 (350 aa).

Residues 1-101 (MGVNLRELIP…REVEERLRRK (101 aa)) form an N-domain region. Positions 30, 83, 155, 157, 176, 178, and 239 each coordinate Mg(2+). An I-domain region spans residues 119–261 (EARKYAMMAA…TALRLVKSLG (143 aa)). The interaction with PCNA stretch occupies residues 341–349 (RQSRLDMWF).

The protein belongs to the XPG/RAD2 endonuclease family. FEN1 subfamily. As to quaternary structure, interacts with PCNA. PCNA stimulates the nuclease activity without altering cleavage specificity. It depends on Mg(2+) as a cofactor.

Structure-specific nuclease with 5'-flap endonuclease and 5'-3' exonuclease activities involved in DNA replication and repair. During DNA replication, cleaves the 5'-overhanging flap structure that is generated by displacement synthesis when DNA polymerase encounters the 5'-end of a downstream Okazaki fragment. Binds the unpaired 3'-DNA end and kinks the DNA to facilitate 5' cleavage specificity. Cleaves one nucleotide into the double-stranded DNA from the junction in flap DNA, leaving a nick for ligation. Also involved in the base excision repair (BER) pathway. Acts as a genome stabilization factor that prevents flaps from equilibrating into structures that lead to duplications and deletions. Also possesses 5'-3' exonuclease activity on nicked or gapped double-stranded DNA. The polypeptide is Flap endonuclease 1 (Aeropyrum pernix (strain ATCC 700893 / DSM 11879 / JCM 9820 / NBRC 100138 / K1)).